The following is a 387-amino-acid chain: UDP-N-acetylglucosamine--N-acetylmuramyl-(pentapeptide) pyrophosphoryl-undecaprenol N-acetylglucosamine transferase (387 aa).

UDP-N-acetyl-alpha-D-glucosamine contacts are provided by residues 23–25 (TGG), N135, R174, S203, I261, 280–285 (ALTVSE), and Q306.

It belongs to the glycosyltransferase 28 family. MurG subfamily.

It localises to the cell inner membrane. The enzyme catalyses di-trans,octa-cis-undecaprenyl diphospho-N-acetyl-alpha-D-muramoyl-L-alanyl-D-glutamyl-meso-2,6-diaminopimeloyl-D-alanyl-D-alanine + UDP-N-acetyl-alpha-D-glucosamine = di-trans,octa-cis-undecaprenyl diphospho-[N-acetyl-alpha-D-glucosaminyl-(1-&gt;4)]-N-acetyl-alpha-D-muramoyl-L-alanyl-D-glutamyl-meso-2,6-diaminopimeloyl-D-alanyl-D-alanine + UDP + H(+). Its pathway is cell wall biogenesis; peptidoglycan biosynthesis. Its function is as follows. Cell wall formation. Catalyzes the transfer of a GlcNAc subunit on undecaprenyl-pyrophosphoryl-MurNAc-pentapeptide (lipid intermediate I) to form undecaprenyl-pyrophosphoryl-MurNAc-(pentapeptide)GlcNAc (lipid intermediate II). The polypeptide is UDP-N-acetylglucosamine--N-acetylmuramyl-(pentapeptide) pyrophosphoryl-undecaprenol N-acetylglucosamine transferase (Colwellia psychrerythraea (strain 34H / ATCC BAA-681) (Vibrio psychroerythus)).